Here is a 340-residue protein sequence, read N- to C-terminus: 4-hydroxythreonine-4-phosphate dehydrogenase (340 aa).

2 residues coordinate substrate: His-141 and Thr-142. A divalent metal cation-binding residues include His-177, His-222, and His-277. The substrate site is built by Lys-285, Asn-294, and Arg-303.

It belongs to the PdxA family. As to quaternary structure, homodimer. It depends on Zn(2+) as a cofactor. Mg(2+) serves as cofactor. The cofactor is Co(2+).

It localises to the cytoplasm. The enzyme catalyses 4-(phosphooxy)-L-threonine + NAD(+) = 3-amino-2-oxopropyl phosphate + CO2 + NADH. The protein operates within cofactor biosynthesis; pyridoxine 5'-phosphate biosynthesis; pyridoxine 5'-phosphate from D-erythrose 4-phosphate: step 4/5. Functionally, catalyzes the NAD(P)-dependent oxidation of 4-(phosphooxy)-L-threonine (HTP) into 2-amino-3-oxo-4-(phosphooxy)butyric acid which spontaneously decarboxylates to form 3-amino-2-oxopropyl phosphate (AHAP). The protein is 4-hydroxythreonine-4-phosphate dehydrogenase of Maricaulis maris (strain MCS10) (Caulobacter maris).